The primary structure comprises 203 residues: MSEILELEAKSRTEFGTGAARALRREGRVPAIIYGAGKIPISISLEEKEITKYYRRPAFISQLINLTIDKKQYKVLPKAVELHPVTDIVRHVDFVFLEAKTQKMEVPVVYEGKERALGVKRGGYFNIIKRRVILLCDINNIPRNVTIDVTNMPIGTSLKSSEVKLPIGCSFVTKKEFVLATIIGRKGVKTEIEGEQQVAGAMQ.

Belongs to the bacterial ribosomal protein bL25 family. CTC subfamily. In terms of assembly, part of the 50S ribosomal subunit; part of the 5S rRNA/L5/L18/L25 subcomplex. Contacts the 5S rRNA. Binds to the 5S rRNA independently of L5 and L18.

In terms of biological role, this is one of the proteins that binds to the 5S RNA in the ribosome where it forms part of the central protuberance. The sequence is that of Large ribosomal subunit protein bL25 from Rickettsia typhi (strain ATCC VR-144 / Wilmington).